Here is an 897-residue protein sequence, read N- to C-terminus: Chromodomain-helicase-DNA-binding protein 1-like (897 aa).

At R9 the chain carries Omega-N-methylarginine. One can recognise a Helicase ATP-binding domain in the interval 58-223 (AQRFHCQNGC…YSLLSFVEPD (166 aa)). Residue 71–78 (DEMGLGKT) participates in ATP binding. Positions 174–177 (DEAH) match the DEAH box motif. The Helicase C-terminal domain occupies 351–513 (LLDKLLAFLY…QKPAADADLQ (163 aa)). Phosphoserine occurs at positions 540, 607, 618, 628, and 636. Positions 601–635 (TLLEKASQEGRSLRNKGSVLIPGLVEGSTKRKRVL) are regulatory linker segment (RLS). The interval 615 to 673 (NKGSVLIPGLVEGSTKRKRVLSPEELEDRQKKRQEAAAKRRRLIEEKKRQKEEAEHKKK) is required for ATPase activity. Disordered regions lie at residues 628–654 (STKRKRVLSPEELEDRQKKRQEAAAKR) and 687–711 (LPSEESEPEDLENGEESSAELDYQD). The stretch at 638-675 (EELEDRQKKRQEAAAKRRRLIEEKKRQKEEAEHKKKMA) forms a coiled coil. Residues 642-654 (DRQKKRQEAAAKR) show a composition bias toward basic and acidic residues. Acidic residues predominate over residues 690–711 (EESEPEDLENGEESSAELDYQD). Positions 704–897 (SAELDYQDPD…SSSSSRQLVP (194 aa)) constitute a Macro domain. Residue S891 is modified to Phosphoserine.

This sequence belongs to the SNF2/RAD54 helicase family. Interacts with nucleosomes; interacts with the acidic patch of histones. Interacts (via macro domain) with PARP1; interacts only when PARP1 is poly-ADP-ribosylated (PARylated). Interacts with CIAO1. Frequently overexpressed in hepatomacellular carcinomas.

The protein localises to the nucleus. It is found in the chromosome. It catalyses the reaction ATP + H2O = ADP + phosphate + H(+). With respect to regulation, adopts an inactive conformation in absence of DNA damage. Binding to poly-ADP-ribosylated histones activates the ATP-dependent chromatin remodeler activity. ATP-dependent chromatin remodeler that mediates chromatin-remodeling following DNA damage. Recruited to DNA damage sites through interaction with poly-ADP-ribose: specifically recognizes and binds histones that are poly-ADP-ribosylated on serine residues in response to DNA damage. Poly-ADP-ribose-binding activates the ATP-dependent chromatin remodeler activity, thereby regulating chromatin during DNA repair. Catalyzes nucleosome sliding away from DNA breaks in an ATP-dependent manner. Chromatin remodeling activity promotes PARP2 removal from chromatin. In Homo sapiens (Human), this protein is Chromodomain-helicase-DNA-binding protein 1-like.